We begin with the raw amino-acid sequence, 498 residues long: ATP synthase subunit beta, chloroplastic (498 aa).

The residue at position 6 (Thr6) is a Phosphothreonine. Ser13 carries the phosphoserine modification. 172–179 contributes to the ATP binding site; sequence GGAGVGKT.

Belongs to the ATPase alpha/beta chains family. F-type ATPases have 2 components, CF(1) - the catalytic core - and CF(0) - the membrane proton channel. CF(1) has five subunits: alpha(3), beta(3), gamma(1), delta(1), epsilon(1). CF(0) has four main subunits: a(1), b(1), b'(1) and c(9-12).

The protein localises to the plastid. It is found in the chloroplast thylakoid membrane. The enzyme catalyses ATP + H2O + 4 H(+)(in) = ADP + phosphate + 5 H(+)(out). Functionally, produces ATP from ADP in the presence of a proton gradient across the membrane. The catalytic sites are hosted primarily by the beta subunits. This chain is ATP synthase subunit beta, chloroplastic, found in Barbarea verna (Land cress).